Here is an 874-residue protein sequence, read N- to C-terminus: Alanine--tRNA ligase (874 aa).

Residues histidine 561, histidine 565, cysteine 663, and histidine 667 each contribute to the Zn(2+) site.

This sequence belongs to the class-II aminoacyl-tRNA synthetase family. It depends on Zn(2+) as a cofactor.

It is found in the cytoplasm. It catalyses the reaction tRNA(Ala) + L-alanine + ATP = L-alanyl-tRNA(Ala) + AMP + diphosphate. Functionally, catalyzes the attachment of alanine to tRNA(Ala) in a two-step reaction: alanine is first activated by ATP to form Ala-AMP and then transferred to the acceptor end of tRNA(Ala). Also edits incorrectly charged Ser-tRNA(Ala) and Gly-tRNA(Ala) via its editing domain. This is Alanine--tRNA ligase from Trichodesmium erythraeum (strain IMS101).